A 231-amino-acid chain; its full sequence is GSK-3-binding protein FRAT2 (231 aa).

Disordered regions lie at residues 1–24 and 53–109; these read MPCRREEEEEAGDEAEGEEDDDSF and DTAH…PGAV. The span at 7 to 23 shows a compositional bias: acidic residues; the sequence is EEEEAGDEAEGEEDDDS. Positions 172 to 194 are involved in GSK-3 binding; it reads DPHRLLQQLVLSGNLIKEAVRRL. The interval 203-231 is disordered; that stretch reads ATSPASAPGSGGGRSGPDSVTLQPSGAWL.

This sequence belongs to the GSK-3-binding protein family. In terms of assembly, binds GSK-3 and prevents GSK-3-dependent phosphorylation.

Positively regulates the Wnt signaling pathway by stabilizing beta-catenin through the association with GSK-3. This Mus musculus (Mouse) protein is GSK-3-binding protein FRAT2 (Frat2).